Here is a 203-residue protein sequence, read N- to C-terminus: Putative phosphoserine phosphatase 2 (203 aa).

Histidine 9 (tele-phosphohistidine intermediate) is an active-site residue. Histidine 149 is a catalytic residue.

This sequence belongs to the histidine phosphatase superfamily. Metal-independent phosphoserine phosphatase family. As to quaternary structure, heterodimer with PspA. The PspB subunit appears to have no or considerably lower PSP activity compared with that of PspA.

The catalysed reaction is O-phospho-L-serine + H2O = L-serine + phosphate. It carries out the reaction O-phospho-D-serine + H2O = D-serine + phosphate. The protein operates within amino-acid biosynthesis; L-serine biosynthesis; L-serine from 3-phospho-D-glycerate: step 3/3. Its activity is regulated as follows. Activity is not inhibited by EDTA in vitro, nor enhanced by the addition of Mg(2+). Functionally, part of a complex that catalyzes the dephosphorylation of L-phosphoserine to serine and inorganic phosphate. Is poorly or not active toward D-phosphoserine, DL-phosphothreonine, 3-phosphoglycerate, para-nitrophenylphosphate, and fructose-6-phosphate. Does not display phosphoglycerate mutase activity. The sequence is that of Putative phosphoserine phosphatase 2 (pspB) from Hydrogenobacter thermophilus (strain DSM 6534 / IAM 12695 / TK-6).